A 382-amino-acid chain; its full sequence is Porphobilinogen deaminase, chloroplastic (382 aa).

The N-terminal 62 residues, 1–62, are a transit peptide targeting the chloroplast; that stretch reads MDIASSSLSQ…KQSSSGFVKA (62 aa). The dipyrromethane site is built by arginine 80 and serine 82. Serine 123 carries the post-translational modification Phosphoserine. Dipyrromethane-binding positions include 156–157, 200–206, and 223–229; these read KD, TASLRRK, and RGNVQTR. The Proton donor/acceptor role is filled by aspartate 157. Cysteine 316 is modified (S-(dipyrrolylmethanemethyl)cysteine).

This sequence belongs to the HMBS family. Monomer. The cofactor is dipyrromethane.

The protein resides in the plastid. Its subcellular location is the chloroplast. The catalysed reaction is 4 porphobilinogen + H2O = hydroxymethylbilane + 4 NH4(+). It participates in porphyrin-containing compound metabolism; protoporphyrin-IX biosynthesis; coproporphyrinogen-III from 5-aminolevulinate: step 2/4. It functions in the pathway porphyrin-containing compound metabolism; chlorophyll biosynthesis. With respect to regulation, inhibited by NH(3), heavy-metal ions, hydroxylamine and 2-bromoporphobilinogen. Not inhibited by N-ethylmaleimide. Its function is as follows. Tetrapolymerization of the monopyrrole PBG into the hydroxymethylbilane pre-uroporphyrinogen in several discrete steps. In Arabidopsis thaliana (Mouse-ear cress), this protein is Porphobilinogen deaminase, chloroplastic (HEMC).